The sequence spans 976 residues: Protein phosphatase 1 regulatory subunit 12B (976 aa).

The segment covering 1-24 (MAELEHLGGKRAESARARRAEQLR) has biased composition (basic and acidic residues). Residues 1 to 52 (MAELEHLGGKRAESARARRAEQLRRWRGSLTEQEPAERQGAGRQLQTRRGSP) form a disordered region. S29 carries the phosphoserine modification. 5 ANK repeats span residues 57–86 (EDGAVFLAACSSGDTDEVKKLLARGADINT), 90–119 (DGLTALHQACIDENLDMVKFLVENRANVNQ), 123–152 (EGWTPLHAAASCGYLNIAEYFISHGASVGI), 216–245 (SGATALHVAAAKGYSEVLRLLIQAGYELNV), and 249–278 (DGWTPLHAAAHWGVKEACSILAEALCDMDI). The tract at residues 342-489 (EEIPKSQDTE…LDDKDKEREN (148 aa)) is disordered. Residues 362–374 (SEEEEGEDEVSES) show a composition bias toward acidic residues. Residues 375-385 (ETEKEADKKPE) are compositionally biased toward basic and acidic residues. The span at 411-423 (FSASSARRLSSLF) shows a compositional bias: low complexity. The residue at position 444 (T444) is a Phosphothreonine. Residues 465–477 (SSIYRSSSSPRIS) show a composition bias toward low complexity. A compositionally biased stretch (basic and acidic residues) spans 480–489 (LDDKDKEREN). Position 502 is a phosphoserine (S502). The segment at 503 to 873 (STSDIEEKEN…LTSRVEEDSN (371 aa)) is disordered. The segment covering 538 to 564 (ETPQTIAPSTYTSTYLKRTPYKSQADS) has biased composition (polar residues). The span at 622–631 (VRDEEAESLR) shows a compositional bias: basic and acidic residues. Positions 632–642 (KARSRQARQTR) are enriched in basic residues. T645 is modified (phosphothreonine). Over residues 655–679 (EAEKTFSRSRAERQAQEQPGEKLED) the composition is skewed to basic and acidic residues. Polar residues-rich tracts occupy residues 722–739 (DKPTTPVSPSASRPSLYT) and 747–763 (SRASGPDSENSETSTHA). Basic and acidic residues predominate over residues 765-777 (AAKEMDTSEKGEA). Over residues 791-801 (ERRRAKDRRRG) the composition is skewed to basic residues. The residue at position 802 (T802) is a Phosphothreonine. Positions 818–830 (EEVKEALHERLSR) are enriched in basic and acidic residues. A Phosphoserine modification is found at S833. Basic and acidic residues predominate over residues 844–860 (YSDRASARARREAREAR). S941 is subject to Phosphoserine.

PP1 comprises a catalytic subunit, PPP1CA, PPP1CB or PPP1CC, and one or several targeting or regulatory subunits. PPP1R12B mediates binding to myosin. Isoform 3 and isoform 4 bind PPP1R12A, but not isoform 1 of PPP1R12B itself. Binds IL16.

It is found in the cytoplasm. The protein localises to the cytoskeleton. The protein resides in the stress fiber. Its function is as follows. Regulates myosin phosphatase activity. Augments Ca(2+) sensitivity of the contractile apparatus. This is Protein phosphatase 1 regulatory subunit 12B (Ppp1r12b) from Mus musculus (Mouse).